The primary structure comprises 197 residues: Peptidyl-tRNA hydrolase (197 aa).

Residue tyrosine 18 participates in tRNA binding. Histidine 23 (proton acceptor) is an active-site residue. Residues tyrosine 68, asparagine 70, and asparagine 116 each coordinate tRNA.

The protein belongs to the PTH family. As to quaternary structure, monomer.

Its subcellular location is the cytoplasm. The catalysed reaction is an N-acyl-L-alpha-aminoacyl-tRNA + H2O = an N-acyl-L-amino acid + a tRNA + H(+). Hydrolyzes ribosome-free peptidyl-tRNAs (with 1 or more amino acids incorporated), which drop off the ribosome during protein synthesis, or as a result of ribosome stalling. Functionally, catalyzes the release of premature peptidyl moieties from peptidyl-tRNA molecules trapped in stalled 50S ribosomal subunits, and thus maintains levels of free tRNAs and 50S ribosomes. In Desulfotalea psychrophila (strain LSv54 / DSM 12343), this protein is Peptidyl-tRNA hydrolase.